The sequence spans 372 residues: Ciliary neurotrophic factor receptor subunit alpha (372 aa).

The signal sequence occupies residues 1 to 22 (MAASVPWACCAVLAAAAAAVYT). The 78-residue stretch at 27 to 104 (PQEAPHVQYE…WHLRHQVLLH (78 aa)) folds into the Ig-like C2-type domain. Cysteines 46 and 89 form a disulfide. Residues N60, N70, N142, and N190 are each glycosylated (N-linked (GlcNAc...) asparagine). Fibronectin type-III domains follow at residues 108–205 (PPRE…VKPD) and 206–306 (PPEN…TEEP). The short motif at 290–294 (WSDWS) is the WSXWS motif element. The interval 301 to 338 (PWTEEPRHLTTEAQAPETTTSTTSSLAPPPTTKICDPG) is disordered. Over residues 311–326 (TEAQAPETTTSTTSSL) the composition is skewed to low complexity. The GPI-anchor amidated serine moiety is linked to residue S342. Residues 343-372 (GGGPSILFLTSVPVTLVLAAAAATANNLLI) constitute a propeptide, removed in mature form.

Belongs to the type I cytokine receptor family. Type 3 subfamily. Forms a heterotrimer with LIFR and IL6ST. Interacts with heterodimeric neurotropic cytokine composed of CLCF1/CLC and CRLF1/CLF-1. Either alone or in complex with the heterodimer CLCF1-CRLF1 interacts with SORL1; this interaction may promote internalization and lysosomal degradation.

The protein resides in the cell membrane. Binds to CNTF. The alpha subunit provides the receptor specificity. The protein is Ciliary neurotrophic factor receptor subunit alpha (Cntfr) of Mus musculus (Mouse).